The chain runs to 326 residues: N-acetyl-gamma-glutamyl-phosphate reductase (326 aa).

Residue Cys155 is part of the active site.

The protein belongs to the NAGSA dehydrogenase family. Type 1 subfamily.

It localises to the cytoplasm. The enzyme catalyses N-acetyl-L-glutamate 5-semialdehyde + phosphate + NADP(+) = N-acetyl-L-glutamyl 5-phosphate + NADPH + H(+). It functions in the pathway amino-acid biosynthesis; L-arginine biosynthesis; N(2)-acetyl-L-ornithine from L-glutamate: step 3/4. In terms of biological role, catalyzes the NADPH-dependent reduction of N-acetyl-5-glutamyl phosphate to yield N-acetyl-L-glutamate 5-semialdehyde. The protein is N-acetyl-gamma-glutamyl-phosphate reductase of Shewanella baltica (strain OS185).